The following is a 108-amino-acid chain: E3 ubiquitin-protein ligase Midline-1 (108 aa).

Positions 1 to 100 (KSAPKHEWIG…IITGLPIPDH (100 aa)) constitute a B30.2/SPRY domain.

It belongs to the TRIM/RBCC family. As to quaternary structure, homodimer or heterodimer with MID2. Interacts with IGBP1.

The protein resides in the cytoplasm. It is found in the cytoskeleton. The catalysed reaction is S-ubiquitinyl-[E2 ubiquitin-conjugating enzyme]-L-cysteine + [acceptor protein]-L-lysine = [E2 ubiquitin-conjugating enzyme]-L-cysteine + N(6)-ubiquitinyl-[acceptor protein]-L-lysine.. Has E3 ubiquitin ligase activity towards IGBP1, promoting its monoubiquitination, which results in deprotection of the catalytic subunit of protein phosphatase PP2A, and its subsequent degradation by polyubiquitination. This Mus caroli (Ryukyu mouse) protein is E3 ubiquitin-protein ligase Midline-1 (Mid1).